Consider the following 478-residue polypeptide: Glutamate-1-semialdehyde 2,1-aminomutase, chloroplastic (478 aa).

The residue at position 318 (lysine 318) is an N6-(pyridoxal phosphate)lysine.

Belongs to the class-III pyridoxal-phosphate-dependent aminotransferase family. HemL subfamily. As to quaternary structure, homodimer. It depends on pyridoxal 5'-phosphate as a cofactor.

It is found in the plastid. Its subcellular location is the chloroplast. The catalysed reaction is (S)-4-amino-5-oxopentanoate = 5-aminolevulinate. The protein operates within porphyrin-containing compound metabolism; protoporphyrin-IX biosynthesis; 5-aminolevulinate from L-glutamyl-tRNA(Glu): step 2/2. It participates in porphyrin-containing compound metabolism; chlorophyll biosynthesis. This Nicotiana tabacum (Common tobacco) protein is Glutamate-1-semialdehyde 2,1-aminomutase, chloroplastic (GSA).